The sequence spans 323 residues: Annexin A3 (323 aa).

Ala2 is subject to N-acetylalanine. 4 Annexin repeats span residues 18-89, 90-161, 173-245, and 249-320; these read FSPS…ALVT, APAL…TLAD, HLAK…AIVH, and NTPA…KICG. Residue Lys177 is modified to N6-acetyllysine. Position 267 is a phosphothreonine (Thr267).

The protein belongs to the annexin family.

Its function is as follows. Inhibitor of phospholipase A2, also possesses anti-coagulant properties. In Mus musculus (Mouse), this protein is Annexin A3 (Anxa3).